A 229-amino-acid polypeptide reads, in one-letter code: Synaptogyrin-3 (229 aa).

Met1 carries the N-acetylmethionine modification. In terms of domain architecture, MARVEL spans 20–172; sequence FARRPQTLLR…LTVKALQRFR (153 aa). Helical transmembrane passes span 30 to 50, 70 to 90, 105 to 125, and 148 to 168; these read VASW…GYVN, FGVA…LLDV, VLLD…GFCF, and AAIA…VKAL. The span at 209–219 shows a compositional bias: polar residues; sequence QSPPFTETLDT. The disordered stretch occupies residues 209-229; that stretch reads QSPPFTETLDTSPKGYQVPAY.

This sequence belongs to the synaptogyrin family. Interacts (via N-terminus) with SLC6A3 (via N-terminus). May interact with VMAT2. As to expression, expressed in brain and placenta.

The protein localises to the cytoplasmic vesicle. It is found in the secretory vesicle. The protein resides in the synaptic vesicle membrane. Its subcellular location is the synapse. In terms of biological role, may play a role in regulated exocytosis. May indirectly regulate the activity of the plasma membrane dopamine transporter SLC6A3 and thereby regulate dopamine transport back from the synaptic cleft into the presynaptic terminal. The polypeptide is Synaptogyrin-3 (Homo sapiens (Human)).